The primary structure comprises 431 residues: Histidinol dehydrogenase (431 aa).

3 residues coordinate NAD(+): Tyr127, Gln189, and Asn212. The substrate site is built by Ser237, Gln259, and His262. 2 residues coordinate Zn(2+): Gln259 and His262. Catalysis depends on proton acceptor residues Glu326 and His327. Substrate contacts are provided by His327, Asp360, Glu414, and His419. Asp360 lines the Zn(2+) pocket. Zn(2+) is bound at residue His419.

This sequence belongs to the histidinol dehydrogenase family. Zn(2+) is required as a cofactor.

The catalysed reaction is L-histidinol + 2 NAD(+) + H2O = L-histidine + 2 NADH + 3 H(+). Its pathway is amino-acid biosynthesis; L-histidine biosynthesis; L-histidine from 5-phospho-alpha-D-ribose 1-diphosphate: step 9/9. Its function is as follows. Catalyzes the sequential NAD-dependent oxidations of L-histidinol to L-histidinaldehyde and then to L-histidine. This Xanthomonas euvesicatoria pv. vesicatoria (strain 85-10) (Xanthomonas campestris pv. vesicatoria) protein is Histidinol dehydrogenase.